Here is a 223-residue protein sequence, read N- to C-terminus: N-acetylmuramic acid 6-phosphate phosphatase (223 aa).

Residue aspartate 9 is the Nucleophile of the active site. Aspartate 9, aspartate 11, and aspartate 168 together coordinate Mg(2+). Catalysis depends on aspartate 11, which acts as the Proton donor.

The protein belongs to the HAD-like hydrolase superfamily. CbbY/CbbZ/Gph/YieH family. Phosphatase MupP subfamily. It depends on Mg(2+) as a cofactor.

It carries out the reaction N-acetyl-D-muramate 6-phosphate + H2O = N-acetyl-D-muramate + phosphate. It participates in cell wall biogenesis; peptidoglycan recycling. Specifically catalyzes the dephosphorylation of N-acetylmuramate 6-phosphate (MurNAc-6P) to MurNac. Is involved in peptidoglycan recycling as part of a cell wall recycling pathway that bypasses de novo biosynthesis of the peptidoglycan precursor UDP-MurNAc. Plays a role in intrinsic resistance to fosfomycin, which targets the de novo synthesis of UDP-MurNAc. Shows a very low activity on GlcNAc-6P, and neither alpha-1-phosphorylated MurNAc, GlcNAc, or glucose nor glucosamine-6P or glucose-6P can be used as a substrate. The sequence is that of N-acetylmuramic acid 6-phosphate phosphatase from Pseudomonas putida (strain ATCC 47054 / DSM 6125 / CFBP 8728 / NCIMB 11950 / KT2440).